We begin with the raw amino-acid sequence, 480 residues long: Glycerol 3-phosphate dehydrogenase (480 aa).

FAD contacts are provided by residues I12, E31, 40-41 (TT), and 45-47 (SAI). Sn-glycerol 3-phosphate contacts are provided by S45 and H49. The Proton acceptor role is filled by H49. Residue V172 coordinates FAD. Residues K249 and R310 each coordinate sn-glycerol 3-phosphate. 335-336 (IE) contacts FAD. S337 is a binding site for sn-glycerol 3-phosphate. FAD is bound at residue S341. [2Fe-2S] cluster-binding residues include C400, C402, C437, and C442.

[2Fe-2S] cluster is required as a cofactor.

It carries out the reaction sn-glycerol 3-phosphate + A = dihydroxyacetone phosphate + AH2. It functions in the pathway polyol metabolism; glycerol degradation via glycerol kinase pathway; glycerone phosphate from sn-glycerol 3-phosphate (aerobic route): step 1/1. Catalyzes the dehydrogenation of glycerol 3-phosphate to dihydroxyacetone phosphate. Is probably involved in anaerobic glycerol metabolism. Active in vitro with the artificial electron acceptor 2,6-dichlorophenolindophenol (DCPIP), but not with NAD or NADP. Also displays a very low oxidase activity in vitro on glycerol 3-phosphate with O2 as the electron acceptor, but this activity is most likely not physiological. The chain is Glycerol 3-phosphate dehydrogenase from Caloramator mitchellensis.